The following is a 265-amino-acid chain: Thiazole synthase (265 aa).

Lys107 (schiff-base intermediate with DXP) is an active-site residue. 1-deoxy-D-xylulose 5-phosphate-binding positions include Gly168, 194–195 (AG), and 216–217 (NT).

It belongs to the ThiG family. Homotetramer. Forms heterodimers with either ThiH or ThiS.

The protein resides in the cytoplasm. The enzyme catalyses [ThiS sulfur-carrier protein]-C-terminal-Gly-aminoethanethioate + 2-iminoacetate + 1-deoxy-D-xylulose 5-phosphate = [ThiS sulfur-carrier protein]-C-terminal Gly-Gly + 2-[(2R,5Z)-2-carboxy-4-methylthiazol-5(2H)-ylidene]ethyl phosphate + 2 H2O + H(+). It functions in the pathway cofactor biosynthesis; thiamine diphosphate biosynthesis. Catalyzes the rearrangement of 1-deoxy-D-xylulose 5-phosphate (DXP) to produce the thiazole phosphate moiety of thiamine. Sulfur is provided by the thiocarboxylate moiety of the carrier protein ThiS. In vitro, sulfur can be provided by H(2)S. The protein is Thiazole synthase of Pseudomonas paraeruginosa (strain DSM 24068 / PA7) (Pseudomonas aeruginosa (strain PA7)).